Consider the following 94-residue polypeptide: HssA/B-like protein 49 (94 aa).

The tract at residues 1–20 is disordered; the sequence is MTLFSSISSISNPMTSSKSS.

It belongs to the hssA/B family.

The sequence is that of HssA/B-like protein 49 (hssl49) from Dictyostelium discoideum (Social amoeba).